A 472-amino-acid polypeptide reads, in one-letter code: L-fuculokinase (472 aa).

Belongs to the FGGY kinase family. Requires a divalent metal cation as cofactor.

It carries out the reaction L-fuculose + ATP = L-fuculose 1-phosphate + ADP + H(+). It functions in the pathway carbohydrate degradation; L-fucose degradation; L-lactaldehyde and glycerone phosphate from L-fucose: step 2/3. In terms of biological role, catalyzes the phosphorylation of L-fuculose. This Escherichia coli O157:H7 protein is L-fuculokinase.